A 465-amino-acid polypeptide reads, in one-letter code: L-cystine uptake protein TcyP (465 aa).

10 helical membrane passes run 3 to 23, 34 to 54, 73 to 93, 105 to 125, 184 to 204, 224 to 246, 263 to 283, 338 to 358, 370 to 390, and 394 to 414; these read LFLT…LFYM, VLLA…FFAP, YVRF…LSAF, ISAL…AIGI, PTSA…YLGV, AIIM…AIMT, FVLA…IILA, LSIG…VMIA, FILL…GVGG, and FAAI…GLLI.

This sequence belongs to the dicarboxylate/amino acid:cation symporter (DAACS) (TC 2.A.23) family.

The protein localises to the membrane. Mediates uptake of L-cystine, the oxidized form of L-cysteine. This is L-cystine uptake protein TcyP from Shouchella clausii (strain KSM-K16) (Alkalihalobacillus clausii).